The following is a 349-amino-acid chain: Aspartate carbamoyltransferase catalytic subunit (349 aa).

2 residues coordinate carbamoyl phosphate: Arg59 and Thr60. Lys87 serves as a coordination point for L-aspartate. The carbamoyl phosphate site is built by Arg109, His142, and Gln145. L-aspartate contacts are provided by Arg182 and Arg253. 2 residues coordinate carbamoyl phosphate: Gly294 and Pro295.

This sequence belongs to the aspartate/ornithine carbamoyltransferase superfamily. ATCase family. In terms of assembly, heterododecamer (2C3:3R2) of six catalytic PyrB chains organized as two trimers (C3), and six regulatory PyrI chains organized as three dimers (R2).

It carries out the reaction carbamoyl phosphate + L-aspartate = N-carbamoyl-L-aspartate + phosphate + H(+). Its pathway is pyrimidine metabolism; UMP biosynthesis via de novo pathway; (S)-dihydroorotate from bicarbonate: step 2/3. Catalyzes the condensation of carbamoyl phosphate and aspartate to form carbamoyl aspartate and inorganic phosphate, the committed step in the de novo pyrimidine nucleotide biosynthesis pathway. In Synechococcus sp. (strain CC9605), this protein is Aspartate carbamoyltransferase catalytic subunit.